Reading from the N-terminus, the 486-residue chain is NADH-quinone oxidoreductase subunit N 1 (486 aa).

Transmembrane regions (helical) follow at residues 15-35, 46-66, 72-92, 111-128, 131-151, 166-186, 208-228, 241-261, 276-296, 303-323, 331-351, 375-395, 410-432, and 455-475; these read FLPE…DPVI, ISLI…GIAG, MLMV…VGIL, YHAL…MAAS, LIMV…LAGY, FLLG…IYGL, FVGI…SAAP, PTPV…AIFL, QPLV…AAIL, MLAY…TAHS, MFYL…VSVL, AAMF…GGFF, IWLT…RILV, and FALI…GWVL.

Belongs to the complex I subunit 2 family. In terms of assembly, NDH-1 is composed of 14 different subunits. Subunits NuoA, H, J, K, L, M, N constitute the membrane sector of the complex.

The protein resides in the cell inner membrane. It carries out the reaction a quinone + NADH + 5 H(+)(in) = a quinol + NAD(+) + 4 H(+)(out). In terms of biological role, NDH-1 shuttles electrons from NADH, via FMN and iron-sulfur (Fe-S) centers, to quinones in the respiratory chain. The immediate electron acceptor for the enzyme in this species is believed to be ubiquinone. Couples the redox reaction to proton translocation (for every two electrons transferred, four hydrogen ions are translocated across the cytoplasmic membrane), and thus conserves the redox energy in a proton gradient. The chain is NADH-quinone oxidoreductase subunit N 1 from Solibacter usitatus (strain Ellin6076).